We begin with the raw amino-acid sequence, 192 residues long: Per os infectivity factor 6 (192 aa).

Residues 154 to 174 (IAYVFLFFICIVLLSVLAVFF) traverse the membrane as a helical segment.

It localises to the host membrane. It is found in the virion. Its subcellular location is the host cytoplasm. The protein localises to the host nucleus. Per os infectivity factor. This chain is Per os infectivity factor 6 (AC68), found in Autographa californica nuclear polyhedrosis virus (AcMNPV).